Consider the following 419-residue polypeptide: Histidine--tRNA ligase (419 aa).

It belongs to the class-II aminoacyl-tRNA synthetase family. Homodimer.

It is found in the cytoplasm. The enzyme catalyses tRNA(His) + L-histidine + ATP = L-histidyl-tRNA(His) + AMP + diphosphate + H(+). This Desulforamulus reducens (strain ATCC BAA-1160 / DSM 100696 / MI-1) (Desulfotomaculum reducens) protein is Histidine--tRNA ligase.